The chain runs to 959 residues: Glycine dehydrogenase (decarboxylating) (959 aa).

An N6-(pyridoxal phosphate)lysine modification is found at lysine 708.

The protein belongs to the GcvP family. As to quaternary structure, the glycine cleavage system is composed of four proteins: P, T, L and H. The cofactor is pyridoxal 5'-phosphate.

It carries out the reaction N(6)-[(R)-lipoyl]-L-lysyl-[glycine-cleavage complex H protein] + glycine + H(+) = N(6)-[(R)-S(8)-aminomethyldihydrolipoyl]-L-lysyl-[glycine-cleavage complex H protein] + CO2. Functionally, the glycine cleavage system catalyzes the degradation of glycine. The P protein binds the alpha-amino group of glycine through its pyridoxal phosphate cofactor; CO(2) is released and the remaining methylamine moiety is then transferred to the lipoamide cofactor of the H protein. This is Glycine dehydrogenase (decarboxylating) from Yersinia pseudotuberculosis serotype O:1b (strain IP 31758).